The following is a 648-amino-acid chain: Macrolide export ATP-binding/permease protein MacB (648 aa).

Residues 5–243 form the ABC transporter domain; the sequence is LELKDIRRSY…AGGTEPVVNT (239 aa). 41–48 contacts ATP; it reads GASGSGKS. 4 consecutive transmembrane segments (helical) span residues 273-293, 523-543, 576-596, and 600-620; these read LLTMLGIIIGIASVVSIVVVG, LFLTLVAVISLVVGGIGVMNI, AVLVCLVGGALGITLSLLIAF, and LFLPGWEIGFSPLALLLAFLC.

The protein belongs to the ABC transporter superfamily. Macrolide exporter (TC 3.A.1.122) family. As to quaternary structure, homodimer. Part of the tripartite efflux system MacAB-TolC, which is composed of an inner membrane transporter, MacB, a periplasmic membrane fusion protein, MacA, and an outer membrane component, TolC. The complex forms a large protein conduit and can translocate molecules across both the inner and outer membranes. Interacts with MacA.

The protein localises to the cell inner membrane. Its function is as follows. Part of the tripartite efflux system MacAB-TolC. MacB is a non-canonical ABC transporter that contains transmembrane domains (TMD), which form a pore in the inner membrane, and an ATP-binding domain (NBD), which is responsible for energy generation. Confers resistance against macrolides. The chain is Macrolide export ATP-binding/permease protein MacB from Shigella sonnei (strain Ss046).